Consider the following 1131-residue polypeptide: DNA polymerase II large subunit (1131 aa).

It belongs to the archaeal DNA polymerase II family. As to quaternary structure, heterodimer of a large subunit and a small subunit.

The catalysed reaction is DNA(n) + a 2'-deoxyribonucleoside 5'-triphosphate = DNA(n+1) + diphosphate. The enzyme catalyses Exonucleolytic cleavage in the 3'- to 5'-direction to yield nucleoside 5'-phosphates.. In terms of biological role, possesses two activities: a DNA synthesis (polymerase) and an exonucleolytic activity that degrades single-stranded DNA in the 3'- to 5'-direction. Has a template-primer preference which is characteristic of a replicative DNA polymerase. In Methanococcus maripaludis (strain C5 / ATCC BAA-1333), this protein is DNA polymerase II large subunit.